A 230-amino-acid chain; its full sequence is Ureidoacrylate amidohydrolase RutB (230 aa).

The active-site Proton acceptor is the D24. Residue K133 is part of the active site. C166 (nucleophile) is an active-site residue.

Belongs to the isochorismatase family. RutB subfamily.

It catalyses the reaction (Z)-3-ureidoacrylate + H2O + H(+) = (Z)-3-aminoacrylate + NH4(+) + CO2. The catalysed reaction is (Z)-3-ureidoacrylate + H2O = (Z)-3-aminoacrylate + carbamate + H(+). It carries out the reaction (Z)-2-methylureidoacrylate + H2O + H(+) = (Z)-2-methylaminoacrylate + NH4(+) + CO2. Hydrolyzes ureidoacrylate to form aminoacrylate and carbamate. The carbamate hydrolyzes spontaneously, thereby releasing one of the nitrogen atoms of the pyrimidine ring as ammonia and one of its carbon atoms as CO2. This Escherichia coli (strain B / BL21-DE3) protein is Ureidoacrylate amidohydrolase RutB.